Here is a 299-residue protein sequence, read N- to C-terminus: Diphthine methyl ester synthase 1 (299 aa).

S-adenosyl-L-methionine is bound by residues L9, D85, G88, 113 to 114 (SV), L164, L222, and H247.

It belongs to the diphthine synthase family.

Its subcellular location is the cytoplasm. The catalysed reaction is 2-[(3S)-amino-3-carboxypropyl]-L-histidyl-[translation elongation factor 2] + 4 S-adenosyl-L-methionine = diphthine methyl ester-[translation elongation factor 2] + 4 S-adenosyl-L-homocysteine + 3 H(+). The protein operates within protein modification; peptidyl-diphthamide biosynthesis. Functionally, S-adenosyl-L-methionine-dependent methyltransferase that catalyzes four methylations of the modified target histidine residue in translation elongation factor 2 (EF-2), to form an intermediate called diphthine methyl ester. The four successive methylation reactions represent the second step of diphthamide biosynthesis. This is Diphthine methyl ester synthase 1 (DPH5) from Candida albicans (strain SC5314 / ATCC MYA-2876) (Yeast).